Reading from the N-terminus, the 66-residue chain is DNA-directed RNA polymerase subunit Rpo10 (66 aa).

Zn(2+) is bound by residues cysteine 7, cysteine 10, cysteine 44, and cysteine 45.

This sequence belongs to the archaeal Rpo10/eukaryotic RPB10 RNA polymerase subunit family. As to quaternary structure, part of the RNA polymerase complex. Zn(2+) serves as cofactor.

It localises to the cytoplasm. The enzyme catalyses RNA(n) + a ribonucleoside 5'-triphosphate = RNA(n+1) + diphosphate. Functionally, DNA-dependent RNA polymerase (RNAP) catalyzes the transcription of DNA into RNA using the four ribonucleoside triphosphates as substrates. This is DNA-directed RNA polymerase subunit Rpo10 from Pyrobaculum aerophilum (strain ATCC 51768 / DSM 7523 / JCM 9630 / CIP 104966 / NBRC 100827 / IM2).